A 436-amino-acid polypeptide reads, in one-letter code: 3-ketoacyl-CoA thiolase (436 aa).

Cys99 serves as the catalytic Acyl-thioester intermediate. Active-site proton acceptor residues include His392 and Cys422.

It belongs to the thiolase-like superfamily. Thiolase family. Heterotetramer of two alpha chains (FadJ) and two beta chains (FadI).

The protein localises to the cytoplasm. The catalysed reaction is an acyl-CoA + acetyl-CoA = a 3-oxoacyl-CoA + CoA. It functions in the pathway lipid metabolism; fatty acid beta-oxidation. Catalyzes the final step of fatty acid oxidation in which acetyl-CoA is released and the CoA ester of a fatty acid two carbons shorter is formed. The chain is 3-ketoacyl-CoA thiolase from Salmonella paratyphi A (strain ATCC 9150 / SARB42).